We begin with the raw amino-acid sequence, 257 residues long: Diaminopimelate epimerase (257 aa).

Substrate contacts are provided by N6 and N57. C66 (proton donor) is an active-site residue. Substrate contacts are provided by residues 67 to 68 (GN), N170, and 188 to 189 (ER). The active-site Proton acceptor is the C198. 199–200 (GT) provides a ligand contact to substrate.

This sequence belongs to the diaminopimelate epimerase family. As to quaternary structure, homodimer.

It is found in the cytoplasm. It catalyses the reaction (2S,6S)-2,6-diaminopimelate = meso-2,6-diaminopimelate. It functions in the pathway amino-acid biosynthesis; L-lysine biosynthesis via DAP pathway; DL-2,6-diaminopimelate from LL-2,6-diaminopimelate: step 1/1. In terms of biological role, catalyzes the stereoinversion of LL-2,6-diaminopimelate (L,L-DAP) to meso-diaminopimelate (meso-DAP), a precursor of L-lysine and an essential component of the bacterial peptidoglycan. This Chlorobaculum tepidum (strain ATCC 49652 / DSM 12025 / NBRC 103806 / TLS) (Chlorobium tepidum) protein is Diaminopimelate epimerase.